The chain runs to 622 residues: Type 2 DNA topoisomerase 6 subunit B (622 aa).

Residues Asn48, Asp80, 101–102, 111–118, and Lys435 contribute to the ATP site; these read SR and GQQGIGIS.

Belongs to the TOP6B family. As to quaternary structure, homodimer. Heterotetramer of two Top6A and two Top6B chains.

It catalyses the reaction ATP-dependent breakage, passage and rejoining of double-stranded DNA.. In terms of biological role, relaxes both positive and negative superturns and exhibits a strong decatenase activity. The protein is Type 2 DNA topoisomerase 6 subunit B of Methanococcoides burtonii (strain DSM 6242 / NBRC 107633 / OCM 468 / ACE-M).